The primary structure comprises 125 residues: Ribosome-binding factor A (125 aa).

The protein belongs to the RbfA family. Monomer. Binds 30S ribosomal subunits, but not 50S ribosomal subunits or 70S ribosomes.

The protein localises to the cytoplasm. Its function is as follows. One of several proteins that assist in the late maturation steps of the functional core of the 30S ribosomal subunit. Associates with free 30S ribosomal subunits (but not with 30S subunits that are part of 70S ribosomes or polysomes). Required for efficient processing of 16S rRNA. May interact with the 5'-terminal helix region of 16S rRNA. This Xylella fastidiosa (strain 9a5c) protein is Ribosome-binding factor A.